The primary structure comprises 366 residues: Beta sliding clamp (366 aa).

This sequence belongs to the beta sliding clamp family. Forms a ring-shaped head-to-tail homodimer around DNA which binds and tethers DNA polymerases and other proteins to the DNA. The DNA replisome complex has a single clamp-loading complex (3 tau and 1 each of delta, delta', psi and chi subunits) which binds 3 Pol III cores (1 core on the leading strand and 2 on the lagging strand) each with a beta sliding clamp dimer. Additional proteins in the replisome are other copies of gamma, psi and chi, Ssb, DNA helicase and RNA primase.

The protein localises to the cytoplasm. Its function is as follows. Confers DNA tethering and processivity to DNA polymerases and other proteins. Acts as a clamp, forming a ring around DNA (a reaction catalyzed by the clamp-loading complex) which diffuses in an ATP-independent manner freely and bidirectionally along dsDNA. Initially characterized for its ability to contact the catalytic subunit of DNA polymerase III (Pol III), a complex, multichain enzyme responsible for most of the replicative synthesis in bacteria; Pol III exhibits 3'-5' exonuclease proofreading activity. The beta chain is required for initiation of replication as well as for processivity of DNA replication. This chain is Beta sliding clamp (dnaN), found in Chlamydia pneumoniae (Chlamydophila pneumoniae).